Reading from the N-terminus, the 149-residue chain is MRVILQKDVINLGDAGDLREVADGYARNFLFPKRLAVRANEGNTKAAFHQKKLGELKKEKRKKAMEAVATNLNGKEYDILVKTGGGEKLFGAVTPIDVASILKKNGFELDKRKIEIAEPIRNLGSYKIKIRLAEGIQPVITLHVKKEEE.

The protein belongs to the bacterial ribosomal protein bL9 family.

Its function is as follows. Binds to the 23S rRNA. This Leptospira borgpetersenii serovar Hardjo-bovis (strain JB197) protein is Large ribosomal subunit protein bL9.